The following is a 354-amino-acid chain: Kelch domain-containing protein 8B (354 aa).

8 Kelch repeats span residues 1–31, 32–79, 81–127, 128–175, 176–222, 224–281, 282–329, and 331–354; these read MSAG…HQDG, HLLV…VLGK, VLVV…ERDG, MVYA…LHGN, KIYV…MAEG, VFSL…SLGG, HIVA…QAGP, and LFVI…RDGV.

Its subcellular location is the cytoplasm. The protein resides in the midbody. Involved in pinching off the separated nuclei at the cleavage furrow and in cytokinesis. Required for mitotic integrity and maintenance of chromosomal stability. Protects cells against mitotic errors, centrosomal amplification, micronucleus formation and aneuploidy. Plays a key role of midbody function involving abscission of the daughter cells during cytokinesis and appropriate chromosomal and nuclear segregation into the daughter cells. This Homo sapiens (Human) protein is Kelch domain-containing protein 8B.